We begin with the raw amino-acid sequence, 309 residues long: uncharacterized protein (309 aa).

Pro residues-rich tracts occupy residues 1–17 and 24–51; these read MTSR…PSPP and SPVP…PTPR. Disordered stretches follow at residues 1-174 and 216-240; these read MTSR…PPGV and PPDL…PLHA. Positions 67 to 83 are enriched in low complexity; it reads LRSSPSSALNASRGAPS. Residues 84–112 are compositionally biased toward pro residues; it reads TSPPPSSSPPSSPASTPPSRTPSPTPTAP. Composition is skewed to low complexity over residues 113 to 125 and 135 to 144; these read ASPV…TPAS and APSSSAALSS. Positions 160-174 are enriched in pro residues; it reads PPPPLPPPLQPPPGV. The chain crosses the membrane as a helical span at residues 278–298; the sequence is LFLLFTLLSIHFSPFPIFILL.

The protein localises to the host membrane. This is an uncharacterized protein from Vitis vinifera (Grape).